The following is a 153-amino-acid chain: Late embryogenesis abundant protein B19.4 (153 aa).

The interval 1–153 (MASGQQERSE…IDESKFKTKS (153 aa)) is disordered. Composition is skewed to basic and acidic residues over residues 7–19 (ERSE…REGE), 32–122 (EAQE…EMGR), and 133–153 (GGER…KTKS). A run of 4 repeats spans residues 43 to 62 (RGGQ…EMGH), 63 to 82 (KGGE…EMGH), 83 to 102 (KGGE…EMGH), and 103 to 122 (KGGE…EMGR). A 4 X 20 AA tandem repeats region spans residues 43 to 122 (RGGQTRKEQL…GEEGYREMGR (80 aa)).

It belongs to the small hydrophilic plant seed protein family.

In terms of biological role, lea proteins are late embryonic proteins abundant in higher plant seed embryos. The protein is Late embryogenesis abundant protein B19.4 (B19.4) of Hordeum vulgare (Barley).